Here is a 71-residue protein sequence, read N- to C-terminus: DNA-directed RNA polymerase subunit omega (71 aa).

It belongs to the RNA polymerase subunit omega family. As to quaternary structure, the RNAP catalytic core consists of 2 alpha, 1 beta, 1 beta' and 1 omega subunit. When a sigma factor is associated with the core the holoenzyme is formed, which can initiate transcription.

The catalysed reaction is RNA(n) + a ribonucleoside 5'-triphosphate = RNA(n+1) + diphosphate. In terms of biological role, promotes RNA polymerase assembly. Latches the N- and C-terminal regions of the beta' subunit thereby facilitating its interaction with the beta and alpha subunits. This is DNA-directed RNA polymerase subunit omega from Campylobacter concisus (strain 13826).